Here is a 220-residue protein sequence, read N- to C-terminus: Thiopurine S-methyltransferase (220 aa).

S-adenosyl-L-methionine-binding residues include tryptophan 10, leucine 45, glutamate 66, and arginine 123.

Belongs to the class I-like SAM-binding methyltransferase superfamily. TPMT family.

The protein resides in the cytoplasm. The enzyme catalyses S-adenosyl-L-methionine + a thiopurine = S-adenosyl-L-homocysteine + a thiopurine S-methylether.. The protein is Thiopurine S-methyltransferase of Nitrosospira multiformis (strain ATCC 25196 / NCIMB 11849 / C 71).